The primary structure comprises 311 residues: Pyrimidine-specific ribonucleoside hydrolase RihA (311 aa).

The active site involves histidine 240.

This sequence belongs to the IUNH family. RihA subfamily.

Hydrolyzes cytidine or uridine to ribose and cytosine or uracil, respectively. In Salmonella paratyphi A (strain ATCC 9150 / SARB42), this protein is Pyrimidine-specific ribonucleoside hydrolase RihA.